Consider the following 269-residue polypeptide: Eukaryotic translation initiation factor 3 subunit G-1 (269 aa).

Positions 188-266 (AAIRISNLSE…LILSVEWSKP (79 aa)) constitute an RRM domain. S198 is subject to Phosphoserine.

It belongs to the eIF-3 subunit G family. In terms of assembly, component of the eukaryotic translation initiation factor 3 (eIF-3) complex. The eIF-3 complex interacts with pix.

It is found in the cytoplasm. Its function is as follows. RNA-binding component of the eukaryotic translation initiation factor 3 (eIF-3) complex, which is involved in protein synthesis of a specialized repertoire of mRNAs and, together with other initiation factors, stimulates binding of mRNA and methionyl-tRNAi to the 40S ribosome. The eIF-3 complex specifically targets and initiates translation of a subset of mRNAs involved in cell proliferation. This subunit can bind 18S rRNA. This chain is Eukaryotic translation initiation factor 3 subunit G-1, found in Drosophila melanogaster (Fruit fly).